The following is a 726-amino-acid chain: Catalase-peroxidase (726 aa).

Positions 1 to 33 are disordered; the sequence is MSTTDDTHNTLSTGKCPFHQGGHDRSAGAGTAS. A cross-link (tryptophyl-tyrosyl-methioninium (Trp-Tyr) (with M-252)) is located at residues 105 to 226; sequence WHGAGTYRSI…LGATEMGLIY (122 aa). Histidine 106 (proton acceptor) is an active-site residue. The tryptophyl-tyrosyl-methioninium (Tyr-Met) (with W-105) cross-link spans 226–252; the sequence is YVNPEGPDHSGEPLSAAAAIRATFGNM. Histidine 267 provides a ligand contact to heme b.

This sequence belongs to the peroxidase family. Peroxidase/catalase subfamily. Homodimer or homotetramer. Requires heme b as cofactor. Post-translationally, formation of the three residue Trp-Tyr-Met cross-link is important for the catalase, but not the peroxidase activity of the enzyme.

The catalysed reaction is H2O2 + AH2 = A + 2 H2O. It catalyses the reaction 2 H2O2 = O2 + 2 H2O. Functionally, bifunctional enzyme with both catalase and broad-spectrum peroxidase activity. This chain is Catalase-peroxidase, found in Salmonella paratyphi B (strain ATCC BAA-1250 / SPB7).